The following is a 458-amino-acid chain: Argininosuccinate lyase (458 aa).

The protein belongs to the lyase 1 family. Argininosuccinate lyase subfamily.

It is found in the cytoplasm. It carries out the reaction 2-(N(omega)-L-arginino)succinate = fumarate + L-arginine. Its pathway is amino-acid biosynthesis; L-arginine biosynthesis; L-arginine from L-ornithine and carbamoyl phosphate: step 3/3. This is Argininosuccinate lyase from Geobacter sp. (strain M21).